Consider the following 277-residue polypeptide: Undecaprenyl-diphosphatase (277 aa).

The next 6 membrane-spanning stretches (helical) occupy residues 53–73 (LGAILAVVWEFREKVFGVILG), 85–105 (VNLLIAFLPAVVLGVAFADLI), 108–128 (WLFNPITVASALVVGGLVMLW), 183–203 (AATEFSFFLAMPTMVGAAAYS), 215–235 (GDLPVFALGFVVSFIFAMLAV), and 250–270 (FAWYRIGFGLLILLTWQLGVV).

This sequence belongs to the UppP family.

The protein resides in the cell inner membrane. It carries out the reaction di-trans,octa-cis-undecaprenyl diphosphate + H2O = di-trans,octa-cis-undecaprenyl phosphate + phosphate + H(+). Catalyzes the dephosphorylation of undecaprenyl diphosphate (UPP). Confers resistance to bacitracin. The polypeptide is Undecaprenyl-diphosphatase (Azotobacter vinelandii (strain DJ / ATCC BAA-1303)).